Consider the following 435-residue polypeptide: Estrogen-related receptor gamma (435 aa).

The disordered stretch occupies residues 1-64 (MSNKDRHIDS…GLDSPPLYPS (64 aa)). Polar residues predominate over residues 10 to 29 (SSCSSFIKTEPSSPASLTDS). Over residues 34-47 (SPGGSSDASGSYSS) the composition is skewed to low complexity. A DNA-binding region (nuclear receptor) is located at residues 102 to 177 (KRLCLVCGDI…VGMLKEGVRL (76 aa)). 2 NR C4-type zinc fingers span residues 105–125 (CLVC…CEAC) and 141–160 (CPAT…CQAC). In terms of domain architecture, NR LBD spans 210–434 (PYNKIVSHLL…KLFSEMLEAK (225 aa)).

It belongs to the nuclear hormone receptor family. NR3 subfamily. As to quaternary structure, homodimer. Interacts with NRIP1, NCOA1 and NCOR2. Binds TLE1, PNRC1 and PNRC2. Binds GRIP1. Post-translationally, acetylated by PCAF/KAT2 (in vitro).

It is found in the nucleus. Functionally, orphan receptor that acts as a transcription activator in the absence of bound ligand. Binds specifically to an estrogen response element and activates reporter genes controlled by estrogen response elements. Induces the expression of PERM1 in the skeletal muscle. In Pongo abelii (Sumatran orangutan), this protein is Estrogen-related receptor gamma (ESRRG).